The following is a 264-amino-acid chain: Glutamate racemase (264 aa).

Substrate-binding positions include 11–12 (DS) and 43–44 (YG). Cysteine 74 acts as the Proton donor/acceptor in catalysis. 75-76 (NT) lines the substrate pocket. Cysteine 193 serves as the catalytic Proton donor/acceptor. Residue 194–195 (TH) participates in substrate binding.

Belongs to the aspartate/glutamate racemases family.

It carries out the reaction L-glutamate = D-glutamate. It functions in the pathway cell wall biogenesis; peptidoglycan biosynthesis. Functionally, provides the (R)-glutamate required for cell wall biosynthesis. This chain is Glutamate racemase, found in Bifidobacterium longum subsp. infantis (strain ATCC 15697 / DSM 20088 / JCM 1222 / NCTC 11817 / S12).